A 384-amino-acid polypeptide reads, in one-letter code: F-box protein At2g07140 (384 aa).

The 46-residue stretch at 1 to 46 folds into the F-box domain; sequence MTLPELPKDLVEEILSFVPATSLKRLRSTCKGWNRLFKDDKRFTRI.

In Arabidopsis thaliana (Mouse-ear cress), this protein is F-box protein At2g07140.